A 439-amino-acid chain; its full sequence is Nuclear hormone receptor family member nhr-97 (439 aa).

A compositionally biased stretch (polar residues) spans 1–13 (MSGDAQPSSNQRA). Residues 1 to 22 (MSGDAQPSSNQRATEARPPPSP) are disordered. Residues 32 to 108 (GALCVVCGDR…VGMKIEAVKM (77 aa)) constitute a DNA-binding region (nuclear receptor). 2 NR C4-type zinc fingers span residues 35–56 (CVVC…CHGC) and 72–96 (CRYG…FHRC). A disordered region spans residues 112–135 (LTKRKKEKTDEDDTDDGGSHESFE). The NR LBD domain occupies 173–408 (FVQPSLQNLL…GEGLLFWQLY (236 aa)).

The protein belongs to the nuclear hormone receptor family.

It is found in the nucleus. Functionally, orphan nuclear receptor. The chain is Nuclear hormone receptor family member nhr-97 (nhr-97) from Caenorhabditis elegans.